Reading from the N-terminus, the 130-residue chain is S-adenosylmethionine decarboxylase proenzyme (130 aa).

S63 functions as the Schiff-base intermediate with substrate; via pyruvic acid in the catalytic mechanism. A Pyruvic acid (Ser); by autocatalysis modification is found at S63. H68 (proton acceptor; for processing activity) is an active-site residue. C83 (proton donor; for catalytic activity) is an active-site residue.

This sequence belongs to the prokaryotic AdoMetDC family. Type 1 subfamily. In terms of assembly, heterotetramer of two alpha and two beta chains arranged as a dimer of alpha/beta heterodimers. Pyruvate is required as a cofactor. Is synthesized initially as an inactive proenzyme. Formation of the active enzyme involves a self-maturation process in which the active site pyruvoyl group is generated from an internal serine residue via an autocatalytic post-translational modification. Two non-identical subunits are generated from the proenzyme in this reaction, and the pyruvate is formed at the N-terminus of the alpha chain, which is derived from the carboxyl end of the proenzyme. The post-translation cleavage follows an unusual pathway, termed non-hydrolytic serinolysis, in which the side chain hydroxyl group of the serine supplies its oxygen atom to form the C-terminus of the beta chain, while the remainder of the serine residue undergoes an oxidative deamination to produce ammonia and the pyruvoyl group blocking the N-terminus of the alpha chain.

The enzyme catalyses S-adenosyl-L-methionine + H(+) = S-adenosyl 3-(methylsulfanyl)propylamine + CO2. It participates in amine and polyamine biosynthesis; S-adenosylmethioninamine biosynthesis; S-adenosylmethioninamine from S-adenosyl-L-methionine: step 1/1. Catalyzes the decarboxylation of S-adenosylmethionine to S-adenosylmethioninamine (dcAdoMet), the propylamine donor required for the synthesis of the polyamines spermine and spermidine from the diamine putrescine. The chain is S-adenosylmethionine decarboxylase proenzyme (speH) from Thermotoga maritima (strain ATCC 43589 / DSM 3109 / JCM 10099 / NBRC 100826 / MSB8).